The chain runs to 352 residues: C-X-C chemokine receptor type 4 (352 aa).

The segment at 1-21 (MEGISIYTSDNYTEEMGSGDY) is important for chemokine binding and signaling. The Extracellular portion of the chain corresponds to 1–38 (MEGISIYTSDNYTEEMGSGDYDSIKEPCFREENAHFNR). Tyr7 is modified (sulfotyrosine). Asn11 carries N-linked (GlcNAc...) asparagine glycosylation. Tyr12 carries the post-translational modification Sulfotyrosine. The O-linked (Xyl...) (chondroitin sulfate) serine glycan is linked to Ser18. Residue Tyr21 is modified to Sulfotyrosine. Disulfide bonds link Cys28/Cys274 and Cys109/Cys186. Residues 39-63 (IFLPTIYSIIFLTGIVGNGLVILVM) form a helical membrane-spanning segment. Residues 64-77 (GYQKKLRSMTDKYR) lie on the Cytoplasmic side of the membrane. Residues 78–99 (LHLSVADLLFVITLPFWAVDAV) form a helical membrane-spanning segment. The chemokine binding stretch occupies residues 94–97 (WAVD). Residues 100 to 110 (ANWYFGKFLCK) lie on the Extracellular side of the membrane. A helical transmembrane segment spans residues 111 to 130 (AVHVIYTVNLYSSVLILAFI). Positions 113-117 (HVIYT) are chemokine binding. Residues 131 to 154 (SLDRYLAIVHATNSQRPRKLLAEK) are Cytoplasmic-facing. Positions 133-135 (DRY) match the Important for signaling motif. The segment at 135-147 (YLAIVHATNSQRP) is involved in dimerization; when bound to chemokine. Residues 155–174 (VVYVGVWIPALLLTIPDFIF) traverse the membrane as a helical segment. The Extracellular portion of the chain corresponds to 175–195 (ANVSEADDRYICDRFYPNDLW). Residues 186–190 (CDRFY) are chemokine binding, important for signaling. Positions 191–210 (PNDLWVVVFQFQHIMVGLIL) are involved in dimerization. The helical transmembrane segment at 196-216 (VVVFQFQHIMVGLILPGIVIL) threads the bilayer. Topologically, residues 217–241 (SCYCIIISKLSHSKGHQKRKALKTT) are cytoplasmic. A helical membrane pass occupies residues 242-261 (VILILAFFACWLPYYIGISI). Topologically, residues 262–282 (DSFILLEIIRQGCEFENTVHK) are extracellular. The tract at residues 266-268 (LLE) is involved in dimerization. Residues 283–302 (WISITEALAFFHCCLNPILY) traverse the membrane as a helical segment. Topologically, residues 303 to 352 (AFLGAKFKTSAQHALTSVSRGSSLKILSKGKRGGHSSVSTESESSSFHSS) are cytoplasmic. 2 positions are modified to phosphoserine: Ser319 and Ser321. Ser324 and Ser325 each carry phosphoserine; by PKC and GRK6. The interval 329 to 352 (LSKGKRGGHSSVSTESESSSFHSS) is disordered. Position 330 is a phosphoserine; by GRK6 (Ser330). Lys331 participates in a covalent cross-link: Glycyl lysine isopeptide (Lys-Gly) (interchain with G-Cter in ubiquitin). The span at 337–352 (HSSVSTESESSSFHSS) shows a compositional bias: low complexity. Ser339 is modified (phosphoserine; by GRK6). A phosphoserine mark is found at Ser348 and Ser351.

Belongs to the G-protein coupled receptor 1 family. As to quaternary structure, monomer. Can form homodimers. Interacts with CD164. Interacts with ARRB2; the interaction is dependent on the C-terminal phosphorylation of CXCR4 and allows activation of MAPK1 and MAPK3. Interacts with ARR3; the interaction is dependent on the C-terminal phosphorylation of CXCR4 and modulates calcium mobilization. Interacts with RNF113A; the interaction, enhanced by CXCL12, promotes CXCR4 ubiquitination and subsequent degradation. Interacts (via the cytoplasmic C-terminal) with ITCH (via the WW domains I and II); the interaction, enhanced by CXCL12, promotes CXCR4 ubiquitination and leads to its degradation. Interacts with extracellular ubiquitin. Interacts with DBN1; this interaction is enhanced by antigenic stimulation. Following LPS binding, may form a complex with GDF5, HSP90AA1 and HSPA8. Post-translationally, phosphorylated on agonist stimulation. Rapidly phosphorylated on serine and threonine residues in the C-terminal. Phosphorylation at Ser-324 and Ser-325 leads to recruitment of ITCH, ubiquitination and protein degradation. In terms of processing, ubiquitinated after ligand binding, leading to its degradation. Ubiquitinated by ITCH at the cell membrane on agonist stimulation. The ubiquitin-dependent mechanism, endosomal sorting complex required for transport (ESCRT), then targets CXCR4 for lysosomal degradation. This process is dependent also on prior Ser-/Thr-phosphorylation in the C-terminal of CXCR4. Also binding of ARRB1 to STAM negatively regulates CXCR4 sorting to lysosomes though modulating ubiquitination of SFR5S. Sulfation is required for efficient binding of CXCL12/SDF-1alpha and promotes its dimerization. Post-translationally, O- and N-glycosylated. N-glycosylation can mask coreceptor function. The O-glycosylation chondroitin sulfate attachment does not affect interaction with CXCL12/SDF-1alpha nor its coreceptor activity.

The protein localises to the cell membrane. It is found in the cell junction. It localises to the early endosome. Its subcellular location is the late endosome. The protein resides in the lysosome. In terms of biological role, receptor for the C-X-C chemokine CXCL12/SDF-1 that transduces a signal by increasing intracellular calcium ion levels and enhancing MAPK1/MAPK3 activation. Involved in the AKT signaling cascade. Plays a role in regulation of cell migration, e.g. during wound healing. Acts as a receptor for extracellular ubiquitin; leading to enhanced intracellular calcium ions and reduced cellular cAMP levels. Binds bacterial lipopolysaccharide (LPS) et mediates LPS-induced inflammatory response, including TNF secretion by monocytes. Involved in hematopoiesis and in cardiac ventricular septum formation. Also plays an essential role in vascularization of the gastrointestinal tract, probably by regulating vascular branching and/or remodeling processes in endothelial cells. Involved in cerebellar development. In the CNS, could mediate hippocampal-neuron survival. The sequence is that of C-X-C chemokine receptor type 4 (CXCR4) from Saimiri sciureus (Common squirrel monkey).